The primary structure comprises 404 residues: MKNSIPIDLIYEILSRLPAKSVARCRCVSKRWRSILRHQVFTELFLTRSNARPRLLIGVQQDGEWSFLSTPQPQNRHESSSLVVAAADFHTKFSSGKSRHQCTYASGGSYSYLGFDPIDKEFKVLFMDTCDFIASKDEDHYILTLGTGELKWRKIQCPFTHEPFWERICINGVLYYSAYYSDSNGRSHLIACFDVRSEKFNFIATKHRYDQLINYKGKLCGINLEYARHVGGFPVKLSMWVLEDVEKPEWSKHVYSLWTESEVVKVNRNLSVSGMTATGDIVLSMEDATNPFYVFNFNPDRNTLQVQSVEIQGLGANRDHIACHAFVDYVEDFSVSDAVLQLKSSPLQQQGQDTSHDLSKSVKNKQLDNYEFLANKLNHSVSLAILFCLFFLLFNYLIRLCWVR.

The F-box domain occupies 1 to 44 (MKNSIPIDLIYEILSRLPAKSVARCRCVSKRWRSILRHQVFTEL). Residues 383–403 (LAILFCLFFLLFNYLIRLCWV) traverse the membrane as a helical segment.

Its subcellular location is the membrane. This is F-box only protein 12 (FBX12) from Arabidopsis thaliana (Mouse-ear cress).